The chain runs to 538 residues: Putative outer membrane porin BglH (538 aa).

An N-terminal signal peptide occupies residues 1 to 25; sequence MFRQNLITSAILLMAPLAFSAQSLA. Positions 52–82 are disordered; that stretch reads KDEEKKKYTPATVNRSVSTNDQGYAANPFPT. Positions 62–73 are enriched in polar residues; sequence ATVNRSVSTNDQ.

The protein belongs to the porin LamB (TC 1.B.3) family.

The protein resides in the cell outer membrane. In terms of biological role, may be a sugar porin with a broad carbohydrate specificity. This is Putative outer membrane porin BglH (bglH) from Shigella flexneri.